The primary structure comprises 558 residues: Formate--tetrahydrofolate ligase (558 aa).

67-74 (TPAGEGKT) is a binding site for ATP.

This sequence belongs to the formate--tetrahydrofolate ligase family.

The catalysed reaction is (6S)-5,6,7,8-tetrahydrofolate + formate + ATP = (6R)-10-formyltetrahydrofolate + ADP + phosphate. It functions in the pathway one-carbon metabolism; tetrahydrofolate interconversion. This chain is Formate--tetrahydrofolate ligase, found in Sphingobium sp. (strain NBRC 103272 / SYK-6).